The following is a 351-amino-acid chain: sn-1 oleoyl-lipid 12-desaturase (351 aa).

Transmembrane regions (helical) follow at residues 46–66 (WASV…IIYL) and 68–88 (WYCL…AFVV). Positions 90 to 94 (HDCGH) match the Histidine box-1 motif. A helical transmembrane segment spans residues 102 to 122 (WVNDLVGHIAFAPLIYPFHSW). Residues 126–130 (HDHHH) carry the Histidine box-2 motif. Helical transmembrane passes span 199-219 (IAVV…TTGV) and 222-242 (FVKF…TFTI). Residues 290-294 (HHLSV) carry the Histidine box-3 motif.

Belongs to the fatty acid desaturase type 2 family. It depends on Fe(2+) as a cofactor.

Its subcellular location is the membrane. It catalyses the reaction a 1-[(9Z)-octadecenoyl]-2-acyl-glycerolipid + 2 reduced [2Fe-2S]-[ferredoxin] + O2 + 2 H(+) = a 1-[(9Z,12Z)-octadecdienoyl]-2-acyl-glycerolipid + 2 oxidized [2Fe-2S]-[ferredoxin] + 2 H2O. It participates in lipid metabolism; polyunsaturated fatty acid biosynthesis. Its function is as follows. Desaturase involved in fatty acid biosynthesis. Introduces a double bond at carbon 12 of oleoyl groups (18:1) attached to the sn-1 position of the glycerol moiety of membrane glycerolipids. This enzyme is involved in chilling tolerance because the phase transition temperature of lipids of cellular membranes depends on the degree of unsaturation of fatty acids of the membrane lipids. The sequence is that of sn-1 oleoyl-lipid 12-desaturase from Synechocystis sp. (strain ATCC 27184 / PCC 6803 / Kazusa).